Reading from the N-terminus, the 249-residue chain is 2-C-methyl-D-erythritol 4-phosphate cytidylyltransferase (249 aa).

It belongs to the IspD/TarI cytidylyltransferase family. IspD subfamily.

The enzyme catalyses 2-C-methyl-D-erythritol 4-phosphate + CTP + H(+) = 4-CDP-2-C-methyl-D-erythritol + diphosphate. It functions in the pathway isoprenoid biosynthesis; isopentenyl diphosphate biosynthesis via DXP pathway; isopentenyl diphosphate from 1-deoxy-D-xylulose 5-phosphate: step 2/6. In terms of biological role, catalyzes the formation of 4-diphosphocytidyl-2-C-methyl-D-erythritol from CTP and 2-C-methyl-D-erythritol 4-phosphate (MEP). The chain is 2-C-methyl-D-erythritol 4-phosphate cytidylyltransferase from Thermobifida fusca (strain YX).